A 330-amino-acid chain; its full sequence is Autoinducer 2 import system permease protein LsrD (330 aa).

At 1-4 (MRIR) the chain is on the cytoplasmic side. Residues 5–25 (YGWELALAALLVIEIVSFGAI) form a helical membrane-spanning segment. At 26-42 (NPRMLDLNMLLFSTSDF) the chain is on the periplasmic side. Residues 43 to 63 (ICIGIVALPLTMVIVSGGIDI) traverse the membrane as a helical segment. The Cytoplasmic segment spans residues 64–67 (SFGS). 2 consecutive transmembrane segments (helical) span residues 68–88 (TIGL…PMPL) and 89–109 (AILL…GLII). At 110 to 115 (YTKVNP) the chain is on the cytoplasmic side. Residues 116–136 (LVITLGTLYLFAGSALLLSGM) form a helical membrane-spanning segment. The Periplasmic portion of the chain corresponds to 137–159 (AGATGYEGIGGFPMAFTDFANLD). Residues 160–180 (VLGLPVPLIIFLICLLVFWLW) traverse the membrane as a helical segment. At 181-209 (LHKTHAGRNVFLIGQSPRVALYSAIPVNR) the chain is on the cytoplasmic side. Residues 210-230 (TLCALYAMTGLASAVAAVLLV) form a helical membrane-spanning segment. The Periplasmic portion of the chain corresponds to 231 to 237 (SYFGSAR). The next 2 helical transmembrane spans lie at 238–258 (SDLG…GGAN) and 259–279 (IYGG…VGYL). At 280–285 (QQGLQM) the chain is on the periplasmic side. The helical transmembrane segment at 286-306 (AGVPNQVSSALSGALLIVVVV) threads the bilayer. Residues 307-330 (GRSVSLHRQQIKEWLARRANNPLP) lie on the Cytoplasmic side of the membrane.

It belongs to the binding-protein-dependent transport system permease family. AraH/RbsC subfamily. The complex is composed of two ATP-binding proteins (LsrA), two transmembrane proteins (LsrC and LsrD) and a solute-binding protein (LsrB).

It is found in the cell inner membrane. Part of the ABC transporter complex LsrABCD involved in autoinducer 2 (AI-2) import. Probably responsible for the translocation of the substrate across the membrane. This Escherichia coli O157:H7 protein is Autoinducer 2 import system permease protein LsrD (lsrD).